The following is a 447-amino-acid chain: Signal recognition particle 54 kDa protein (447 aa).

GTP-binding positions include 103-110 (GVQGSGKT), 185-189 (DTAGR), and 245-248 (TKMD).

Belongs to the GTP-binding SRP family. SRP54 subfamily. Part of the signal recognition particle protein translocation system, which is composed of SRP and FtsY. Archaeal SRP consists of a 7S RNA molecule of 300 nucleotides and two protein subunits: SRP54 and SRP19.

The protein localises to the cytoplasm. The catalysed reaction is GTP + H2O = GDP + phosphate + H(+). Involved in targeting and insertion of nascent membrane proteins into the cytoplasmic membrane. Binds to the hydrophobic signal sequence of the ribosome-nascent chain (RNC) as it emerges from the ribosomes. The SRP-RNC complex is then targeted to the cytoplasmic membrane where it interacts with the SRP receptor FtsY. The polypeptide is Signal recognition particle 54 kDa protein (Saccharolobus islandicus (strain Y.G.57.14 / Yellowstone #1) (Sulfolobus islandicus)).